Consider the following 500-residue polypeptide: Aspartyl/glutamyl-tRNA(Asn/Gln) amidotransferase subunit B (500 aa).

The protein belongs to the GatB/GatE family. GatB subfamily. In terms of assembly, heterotrimer of A, B and C subunits.

It carries out the reaction L-glutamyl-tRNA(Gln) + L-glutamine + ATP + H2O = L-glutaminyl-tRNA(Gln) + L-glutamate + ADP + phosphate + H(+). It catalyses the reaction L-aspartyl-tRNA(Asn) + L-glutamine + ATP + H2O = L-asparaginyl-tRNA(Asn) + L-glutamate + ADP + phosphate + 2 H(+). Its function is as follows. Allows the formation of correctly charged Asn-tRNA(Asn) or Gln-tRNA(Gln) through the transamidation of misacylated Asp-tRNA(Asn) or Glu-tRNA(Gln) in organisms which lack either or both of asparaginyl-tRNA or glutaminyl-tRNA synthetases. The reaction takes place in the presence of glutamine and ATP through an activated phospho-Asp-tRNA(Asn) or phospho-Glu-tRNA(Gln). The polypeptide is Aspartyl/glutamyl-tRNA(Asn/Gln) amidotransferase subunit B (Sinorhizobium medicae (strain WSM419) (Ensifer medicae)).